The following is a 478-amino-acid chain: Glycogen synthase (478 aa).

Lys-15 contacts ADP-alpha-D-glucose.

Belongs to the glycosyltransferase 1 family. Bacterial/plant glycogen synthase subfamily.

The enzyme catalyses [(1-&gt;4)-alpha-D-glucosyl](n) + ADP-alpha-D-glucose = [(1-&gt;4)-alpha-D-glucosyl](n+1) + ADP + H(+). It participates in glycan biosynthesis; glycogen biosynthesis. Its function is as follows. Synthesizes alpha-1,4-glucan chains using ADP-glucose. The polypeptide is Glycogen synthase (Acholeplasma laidlawii (strain PG-8A)).